The following is a 226-amino-acid chain: Small ribosomal subunit protein uS3 (226 aa).

One can recognise a KH type-2 domain in the interval 39 to 107; it reads IRKFIKNKLY…NILINITEIK (69 aa).

It belongs to the universal ribosomal protein uS3 family. In terms of assembly, part of the 30S ribosomal subunit. Forms a tight complex with proteins S10 and S14.

Binds the lower part of the 30S subunit head. Binds mRNA in the 70S ribosome, positioning it for translation. This chain is Small ribosomal subunit protein uS3, found in Acetivibrio thermocellus (strain ATCC 27405 / DSM 1237 / JCM 9322 / NBRC 103400 / NCIMB 10682 / NRRL B-4536 / VPI 7372) (Clostridium thermocellum).